Reading from the N-terminus, the 313-residue chain is Biotin synthase (313 aa).

Positions 28 to 258 constitute a Radical SAM core domain; the sequence is NFGNDIELCS…LFPQARLRLS (231 aa). Residues Cys-46, Cys-50, and Cys-53 each coordinate [4Fe-4S] cluster. The [2Fe-2S] cluster site is built by Cys-90, Cys-121, Cys-181, and Arg-256.

It belongs to the radical SAM superfamily. Biotin synthase family. In terms of assembly, homodimer. [4Fe-4S] cluster is required as a cofactor. [2Fe-2S] cluster serves as cofactor.

The catalysed reaction is (4R,5S)-dethiobiotin + (sulfur carrier)-SH + 2 reduced [2Fe-2S]-[ferredoxin] + 2 S-adenosyl-L-methionine = (sulfur carrier)-H + biotin + 2 5'-deoxyadenosine + 2 L-methionine + 2 oxidized [2Fe-2S]-[ferredoxin]. It participates in cofactor biosynthesis; biotin biosynthesis; biotin from 7,8-diaminononanoate: step 2/2. Catalyzes the conversion of dethiobiotin (DTB) to biotin by the insertion of a sulfur atom into dethiobiotin via a radical-based mechanism. The protein is Biotin synthase of Francisella tularensis subsp. tularensis (strain WY96-3418).